A 126-amino-acid chain; its full sequence is Small ribosomal subunit protein uS8 (126 aa).

The protein belongs to the universal ribosomal protein uS8 family. As to quaternary structure, part of the 30S ribosomal subunit. Contacts proteins S5 and S12.

In terms of biological role, one of the primary rRNA binding proteins, it binds directly to 16S rRNA central domain where it helps coordinate assembly of the platform of the 30S subunit. The chain is Small ribosomal subunit protein uS8 from Nitratidesulfovibrio vulgaris (strain DSM 19637 / Miyazaki F) (Desulfovibrio vulgaris).